The sequence spans 414 residues: 5-aminolevulinate synthase (414 aa).

Positions 22, 133, and 152 each coordinate substrate. Pyridoxal 5'-phosphate is bound by residues S185, H213, and T241. K244 is a catalytic residue. K244 bears the N6-(pyridoxal phosphate)lysine mark. Pyridoxal 5'-phosphate contacts are provided by T273 and T274. Position 359 (T359) interacts with substrate.

The protein belongs to the class-II pyridoxal-phosphate-dependent aminotransferase family. In terms of assembly, homodimer. It depends on pyridoxal 5'-phosphate as a cofactor.

It carries out the reaction succinyl-CoA + glycine + H(+) = 5-aminolevulinate + CO2 + CoA. Its pathway is porphyrin-containing compound metabolism; protoporphyrin-IX biosynthesis; 5-aminolevulinate from glycine: step 1/1. The chain is 5-aminolevulinate synthase (hemA) from Rickettsia felis (strain ATCC VR-1525 / URRWXCal2) (Rickettsia azadi).